The primary structure comprises 158 residues: Probable transcription regulator ArfM (158 aa).

Activates, in anaerobic conditions, the transcription of the fermentative operons lctEP and alsDS, of the hmp gene encoding a flavohemoglobin-like protein, the nitrite reductase operon nasDE and the heme biosynthesis genes hemN and hemZ. This is Probable transcription regulator ArfM (arfM) from Bacillus subtilis (strain 168).